We begin with the raw amino-acid sequence, 214 residues long: uncharacterized protein (214 aa).

Its function is as follows. URF2 product may be involved in the transfer of iron-sulfur clusters to the NADH dehydrogenase complex. It may also be required for the assembly of the NADH dehydrogenase complex. This is an uncharacterized protein from Paracoccus denitrificans.